Reading from the N-terminus, the 553-residue chain is ATP synthase F(1) complex subunit alpha, mitochondrial (553 aa).

Residues 1–43 (MLSVRIAAAVARALPRRAGLVSKNALGSSFVGTRNLHASNTRL) constitute a mitochondrion transit peptide. 2 positions are modified to phosphoserine: serine 53 and serine 65. Serine 76 bears the Phosphoserine; alternate mark. O-linked (GlcNAc) serine; alternate glycosylation is present at serine 76. A Phosphoserine modification is found at serine 106. Lysine 123, lysine 126, and lysine 132 each carry N6-acetyllysine. Threonine 134 carries the phosphothreonine modification. An N6-acetyllysine; alternate modification is found at lysine 161. At lysine 161 the chain carries N6-succinyllysine; alternate. Serine 166 is subject to Phosphoserine. Residue lysine 167 is modified to N6-acetyllysine; alternate. The residue at position 167 (lysine 167) is an N6-succinyllysine; alternate. At serine 184 the chain carries Phosphoserine. An Omega-N-methylarginine modification is found at arginine 204. Positions 215, 217, 218, 219, and 220 each coordinate ATP. Threonine 219 provides a ligand contact to Mg(2+). An N6-acetyllysine; alternate mark is found at lysine 230 and lysine 239. An N6-succinyllysine; alternate mark is found at lysine 230 and lysine 239. Lysine 240 bears the N6-acetyllysine mark. Lysine 261 and lysine 305 each carry N6-acetyllysine; alternate. N6-succinyllysine; alternate occurs at positions 261 and 305. Residue aspartate 312 coordinates Mg(2+). Lysine 427 carries the post-translational modification N6-acetyllysine; alternate. Lysine 427 is modified (N6-succinyllysine; alternate). Lysine 434 is subject to N6-acetyllysine. The ATP site is built by glutamine 473 and glutamine 475. An N6-acetyllysine; alternate mark is found at lysine 498, lysine 506, lysine 531, and lysine 539. An N6-succinyllysine; alternate mark is found at lysine 498, lysine 506, lysine 531, and lysine 539. At lysine 541 the chain carries N6-acetyllysine.

Belongs to the ATPase alpha/beta chains family. As to quaternary structure, homotrimer. Component of the ATP synthase complex composed at least of ATP5F1A/subunit alpha, ATP5F1B/subunit beta, ATP5MC1/subunit c (homooctomer), MT-ATP6/subunit a, MT-ATP8/subunit 8, ATP5ME/subunit e, ATP5MF/subunit f, ATP5MG/subunit g, ATP5MK/subunit k, ATP5MJ/subunit j, ATP5F1C/subunit gamma, ATP5F1D/subunit delta, ATP5F1E/subunit epsilon, ATP5PF/subunit F6, ATP5PB/subunit b, ATP5PD/subunit d, ATP5PO/subunit OSCP. ATP synthase complex consists of a soluble F(1) head domain (subunits alpha(3) and beta(3)) - the catalytic core - and a membrane F(0) domain - the membrane proton channel (subunits c, a, 8, e, f, g, k and j). These two domains are linked by a central stalk (subunits gamma, delta, and epsilon) rotating inside the F1 region and a stationary peripheral stalk (subunits F6, b, d, and OSCP). Interacts with ATPAF2. Interacts with HRG; the interaction occurs on the surface of T-cells and alters the cell morphology when associated with concanavalin (in vitro). Interacts with PLG (angiostatin peptide); the interaction inhibits most of the angiogenic properties of angiostatin. Interacts with BLOC1S1. Interacts with BCL2L1 isoform BCL-X(L); the interaction mediates the association of BCL2L1 isoform BCL-X(L) with the mitochondrial membrane F(1)F(0) ATP synthase and enhances neurons metabolic efficiency. Interacts with CLN5 and PPT1. Interacts with S100A1; this interaction increases F1-ATPase activity. Interacts with ABCB7; this interaction allows the regulation of cellular iron homeostasis and cellular reactive oxygen species (ROS) levels in cardiomyocytes. Acetylated on lysine residues. BLOC1S1 is required for acetylation. Expressed in flagella of epididymal sperm.

The protein resides in the mitochondrion. It is found in the mitochondrion inner membrane. It localises to the cell membrane. Functionally, subunit alpha, of the mitochondrial membrane ATP synthase complex (F(1)F(0) ATP synthase or Complex V) that produces ATP from ADP in the presence of a proton gradient across the membrane which is generated by electron transport complexes of the respiratory chain. ATP synthase complex consist of a soluble F(1) head domain - the catalytic core - and a membrane F(1) domain - the membrane proton channel. These two domains are linked by a central stalk rotating inside the F(1) region and a stationary peripheral stalk. During catalysis, ATP synthesis in the catalytic domain of F(1) is coupled via a rotary mechanism of the central stalk subunits to proton translocation. In vivo, can only synthesize ATP although its ATP hydrolase activity can be activated artificially in vitro. With the catalytic subunit beta (ATP5F1B), forms the catalytic core in the F(1) domain. Subunit alpha does not bear the catalytic high-affinity ATP-binding sites. The sequence is that of ATP synthase F(1) complex subunit alpha, mitochondrial from Rattus norvegicus (Rat).